The sequence spans 499 residues: MILILLFLTAITVITVRLYRKVLRFPPGPFPLPLIGNAHQIAYQAWRRGGILPALDYYRKKYGNAYTLWLGPKASVSITDFETSQEVFVKQGKKCYNRQLAPILEHVTGGVGLLIANGENWAEMRRFTLLTFRQMGVGTNIMEKRIMDELNGRCLEIDAQIARNDRAIVDVKFFDLTVGSVINSFLIGKRFEDEEEFLKIKKLFDESSETFNIFDLNVPVWFLKTFLPSRFKLTWDSRHQIMDHVMKGVEERIRDIESGAYKIDPKKPNDVVDAFLSKMKKEEEIAGGQHPYYNLKSLKLVLHDLWLAGQGTTATTLYVGFMKLVNHPGIIQNIQKELLDITENGARDLTLKDRPNTPYLNATIAEIQRHASILNVNFWRINHETIHFNDYQVDPGTMIAAQVGVLHVNEELFDNPKDFNVEKYLKNPKLLQQVIPFGIGKRSCVGEQIAKSELYLVFGNILLRYNVKKHGSTPTNEDVYPYSSAKLPDVSGKLEFVKL.

C444 contacts heme.

This sequence belongs to the cytochrome P450 family. The cofactor is heme. As to expression, expressed in hypodermis, intestine and vulva upon thiabendazole (TBZ) exposure.

Functionally, cytochromes P450 are a group of heme-thiolate monooxygenases. They oxidize a variety of structurally unrelated compounds, including steroids, fatty acids, and xenobiotics. Involved in the oxidative metabolism of thiabendazole (TBZ). Catalyzes the conversion of TBZ to its hydroxylated form. The polypeptide is Probable cytochrome P450 cyp-35D1 (Caenorhabditis elegans).